The chain runs to 592 residues: Aspartate--tRNA(Asp/Asn) ligase (592 aa).

An L-aspartate-binding site is contributed by Glu-175. The aspartate stretch occupies residues 199–202 (QLFK). Arg-221 lines the L-aspartate pocket. Residues 221-223 (RDE) and Gln-230 contribute to the ATP site. His-447 lines the L-aspartate pocket. Glu-481 contributes to the ATP binding site. Arg-488 is a binding site for L-aspartate. 533 to 536 (GIDR) contributes to the ATP binding site.

The protein belongs to the class-II aminoacyl-tRNA synthetase family. Type 1 subfamily. Homodimer.

The protein resides in the cytoplasm. The enzyme catalyses tRNA(Asx) + L-aspartate + ATP = L-aspartyl-tRNA(Asx) + AMP + diphosphate. In terms of biological role, aspartyl-tRNA synthetase with relaxed tRNA specificity since it is able to aspartylate not only its cognate tRNA(Asp) but also tRNA(Asn). Reaction proceeds in two steps: L-aspartate is first activated by ATP to form Asp-AMP and then transferred to the acceptor end of tRNA(Asp/Asn). The sequence is that of Aspartate--tRNA(Asp/Asn) ligase from Dictyoglomus turgidum (strain DSM 6724 / Z-1310).